A 373-amino-acid chain; its full sequence is Schlafen-like protein 1 (373 aa).

Residues 1-67 (MAALFEENDS…ELSSEEVDIP (67 aa)) are disordered. An SLFN-like fold region spans residues 247–373 (KAGAKIEFRT…NQVYRLESSV (127 aa)).

This sequence belongs to the Schlafen family. As to quaternary structure, component of the trimeric PUCH (precursor of 21U RNA 5'-end cleavage holoenzyme) complex; consisting of tofu-1, tofu-2 and either slfl-3 or slfl-4; which is required for processing of piRNA precursors. Within the complex, interacts (via N-terminus) with tofu-2 (via N-terminus); the interaction stabilizes tofu-2 and may form a functional nuclease. Within the complex, required for the interaction of tofu-2 (via N-terminus) with slfl-3 (via N-terminus). Interacts (via residues 82-172) with the PETISCO complex subunit tofu-6 (via residues 120-314); the interaction between the PETISCO and PUCH complex members enhances piRNA production in vivo. As to expression, expressed in the germline.

It is found in the cytoplasm. In terms of biological role, component of the trimeric PUCH (precursor of 21U RNA 5'-end cleavage holoenzyme) complex, that acts as an endoribonuclease processing the 5'-end of precursor Piwi-interacting RNAs (piRNAs). The PUCH complex consists of tofu-1, tofu-2 and either slfl-3 or slfl-4, with tofu-2 exhibiting endoribonuclease activity. PUCH-mediated processing strictly requires a 7-methyl-G cap (m7 G-cap) and an uracil at position three (U3). PUCH also exhibits a strict bias for piRNA precursors with an A or G at position 1. Mature piRNA production is enhanced by the interaction of PUCH with the PETISCO complex, which is stabilizing piRNA precursors and allows their processing by PUCH. The polypeptide is Schlafen-like protein 1 (Caenorhabditis elegans).